Here is a 177-residue protein sequence, read N- to C-terminus: Large ribosomal subunit protein uL6 (177 aa).

It belongs to the universal ribosomal protein uL6 family. In terms of assembly, part of the 50S ribosomal subunit.

This protein binds to the 23S rRNA, and is important in its secondary structure. It is located near the subunit interface in the base of the L7/L12 stalk, and near the tRNA binding site of the peptidyltransferase center. This chain is Large ribosomal subunit protein uL6, found in Buchnera aphidicola subsp. Acyrthosiphon kondoi (Acyrthosiphon kondoi symbiotic bacterium).